The primary structure comprises 436 residues: MAKIVKVIGREIIDSRGNPTVEAEVHLEGGFVGLAAAPSGASTGSREALELRDGDKSRFLGKGVLKAVAAVNNEIAQAIVGKDATNQAEIDQIMIDLDGTENKSNFGANAILAVSLANAKAAAASKGLPLYAYIAELNGSAGVYSMPLPMMNIINGGEHADNNVDIQEFMIQPVGAKTLREALRIGAEVFHNLAKVLKAKGMSTAVGDEGGFAPNLASNADALACIKEAVEKAGYVLGKDVTLAMDCASSEFYNKENGMYEMKGEGKSFTSQEFTHYLEELTKQYPIVSIEDGQDESDWEGFAYQTKVLGDRVQLVGDDLFVTNTKILKEGIEKGIANSILIKFNQIGSLTETLAAIKMAKDAGYTAVISHRSGETEDATIADLAVGTAAGQIKTGSMSRSDRIAKYNQLIRIEEALERAGTPAAFPGLKAVKGQA.

Q167 serves as a coordination point for (2R)-2-phosphoglycerate. The active-site Proton donor is E209. Residues D246, E291, and D318 each contribute to the Mg(2+) site. (2R)-2-phosphoglycerate-binding residues include K343, R372, S373, and K394. Catalysis depends on K343, which acts as the Proton acceptor.

This sequence belongs to the enolase family. In terms of assembly, component of the RNA degradosome, a multiprotein complex involved in RNA processing and mRNA degradation. Mg(2+) is required as a cofactor.

Its subcellular location is the cytoplasm. It localises to the secreted. The protein localises to the cell surface. The enzyme catalyses (2R)-2-phosphoglycerate = phosphoenolpyruvate + H2O. It functions in the pathway carbohydrate degradation; glycolysis; pyruvate from D-glyceraldehyde 3-phosphate: step 4/5. Catalyzes the reversible conversion of 2-phosphoglycerate (2-PG) into phosphoenolpyruvate (PEP). It is essential for the degradation of carbohydrates via glycolysis. The polypeptide is Enolase (Haemophilus influenzae (strain PittEE)).